A 283-amino-acid chain; its full sequence is Galactooligosaccharides transport system permease protein GanQ (283 aa).

Transmembrane regions (helical) follow at residues 13-33, 82-102, 115-135, 137-157, 188-208, and 248-268; these read LLFS…PLLW, ISLF…YAFS, LFLL…FVLA, ILGM…GLIP, IFFQ…AMNG, and TTFA…FIML. The ABC transmembrane type-1 domain maps to 76-268; sequence YVNSMKISLF…IPVAVIFIML (193 aa).

It belongs to the binding-protein-dependent transport system permease family. The complex is composed of two ATP-binding proteins (MsmX), two transmembrane proteins (GanP and GanQ) and a solute-binding protein (GanS).

It localises to the cell membrane. In terms of biological role, involved in galactan degradation. Part of the ABC transporter complex GanPQS involved in the uptake of galactooligosaccharides. Responsible for the translocation of the substrate across the membrane. This is Galactooligosaccharides transport system permease protein GanQ (ganQ) from Bacillus subtilis (strain 168).